A 447-amino-acid polypeptide reads, in one-letter code: Kynurenine 3-monooxygenase (447 aa).

The protein belongs to the aromatic-ring hydroxylase family. KMO subfamily. FAD is required as a cofactor.

The enzyme catalyses L-kynurenine + NADPH + O2 + H(+) = 3-hydroxy-L-kynurenine + NADP(+) + H2O. The protein operates within cofactor biosynthesis; NAD(+) biosynthesis; quinolinate from L-kynurenine: step 1/3. Catalyzes the hydroxylation of L-kynurenine (L-Kyn) to form 3-hydroxy-L-kynurenine (L-3OHKyn). Required for synthesis of quinolinic acid. This chain is Kynurenine 3-monooxygenase, found in Flavobacterium psychrophilum (strain ATCC 49511 / DSM 21280 / CIP 103535 / JIP02/86).